The following is a 102-amino-acid chain: Large ribosomal subunit protein eL21 (102 aa).

Positions M1–R21 are enriched in basic residues. The interval M1 to Q33 is disordered.

This sequence belongs to the eukaryotic ribosomal protein eL21 family.

This is Large ribosomal subunit protein eL21 from Methanopyrus kandleri (strain AV19 / DSM 6324 / JCM 9639 / NBRC 100938).